The sequence spans 238 residues: uncharacterized protein (238 aa).

Residues 10–33 (TLLALMISLSLSSLLLLSISHFYV) traverse the membrane as a helical segment.

Its subcellular location is the membrane. This is an uncharacterized protein from Haemophilus influenzae (strain ATCC 51907 / DSM 11121 / KW20 / Rd).